Reading from the N-terminus, the 265-residue chain is Indole-3-glycerol phosphate synthase (265 aa).

Belongs to the TrpC family.

The enzyme catalyses 1-(2-carboxyphenylamino)-1-deoxy-D-ribulose 5-phosphate + H(+) = (1S,2R)-1-C-(indol-3-yl)glycerol 3-phosphate + CO2 + H2O. The protein operates within amino-acid biosynthesis; L-tryptophan biosynthesis; L-tryptophan from chorismate: step 4/5. The sequence is that of Indole-3-glycerol phosphate synthase from Xanthomonas campestris pv. campestris (strain 8004).